We begin with the raw amino-acid sequence, 310 residues long: Acetylglutamate kinase (310 aa).

Residues 74–75 (GG), Arg-96, and Asn-201 each bind substrate.

The protein belongs to the acetylglutamate kinase family. ArgB subfamily.

The protein resides in the cytoplasm. The catalysed reaction is N-acetyl-L-glutamate + ATP = N-acetyl-L-glutamyl 5-phosphate + ADP. The protein operates within amino-acid biosynthesis; L-arginine biosynthesis; N(2)-acetyl-L-ornithine from L-glutamate: step 2/4. In terms of biological role, catalyzes the ATP-dependent phosphorylation of N-acetyl-L-glutamate. This Arthrobacter sp. (strain FB24) protein is Acetylglutamate kinase.